The sequence spans 358 residues: Testis-specific serine/threonine-protein kinase 2 (358 aa).

The region spanning 12–272 (YIVGINLGKG…IDEILSHSWL (261 aa)) is the Protein kinase domain. ATP-binding positions include 18-26 (LGKGSYAKV) and K41. The active-site Proton acceptor is the D136. 2 stretches are compositionally biased toward basic and acidic residues: residues 296 to 315 (DCKL…DHKL) and 329 to 358 (NEDR…KAST). Positions 296–358 (DCKLDTRPGS…SGAEVEKAST (63 aa)) are disordered.

It belongs to the protein kinase superfamily. CAMK Ser/Thr protein kinase family. As to quaternary structure, interacts with TSSK1B. Interacts with HSP90; this interaction stabilizes TSSK2. Requires Mg(2+) as cofactor. Post-translationally, autophosphorylated. Ubiquitinated; HSP90 activity negatively regulates ubiquitination and degradation. Testis-specific. Expressed only in the spermatids postmeiotically at the final stages of cytodifferentiation in the seminiferous tubules (at protein level). Not detected in released sperms in the lumen of the seminiferous tubules. Also present in the epididymal sperm (at protein level).

It is found in the cytoplasm. It localises to the cytoskeleton. The protein resides in the microtubule organizing center. Its subcellular location is the centrosome. The protein localises to the centriole. It is found in the cytoplasmic vesicle. It localises to the secretory vesicle. The protein resides in the acrosome. The enzyme catalyses L-seryl-[protein] + ATP = O-phospho-L-seryl-[protein] + ADP + H(+). The catalysed reaction is L-threonyl-[protein] + ATP = O-phospho-L-threonyl-[protein] + ADP + H(+). Activated by phosphorylation on Thr-174, potentially by autophosphorylation. Its function is as follows. Testis-specific serine/threonine-protein kinase required during spermatid development. Phosphorylates 'Ser-281' of TSKS and SPAG16. Involved in the late stages of spermatogenesis, during the reconstruction of the cytoplasm. During spermatogenesis, required for the transformation of a ring-shaped structure around the base of the flagellum originating from the chromatoid body. This chain is Testis-specific serine/threonine-protein kinase 2 (Tssk2), found in Mus musculus (Mouse).